Consider the following 760-residue polypeptide: General transcription and DNA repair factor IIH helicase subunit XPD (760 aa).

The region spanning 7–283 (GLLVYFPYDY…KETDEQRLRE (277 aa)) is the Helicase ATP-binding domain. An ATP-binding site is contributed by 42-49 (MPSGTGKT). Residues cysteine 116, cysteine 134, cysteine 155, and cysteine 190 each contribute to the [4Fe-4S] cluster site. The DEAH box signature appears at 234–237 (DEAH). Positions 438 to 637 (MDASLAIKPV…TQSRILKARL (200 aa)) are mediates interaction with MMS19. Positions 682-695 (KRFARADKRGKLPR) match the Nuclear localization signal motif.

This sequence belongs to the helicase family. RAD3/XPD subfamily. As to quaternary structure, component of the 7-subunit TFIIH core complex composed of XPB/ERCC3, XPD/ERCC2, GTF2H1, GTF2H2, GTF2H3, GTF2H4 and GTF2H5, which is active in NER. The core complex associates with the 3-subunit CDK-activating kinase (CAK) module composed of CCNH/cyclin H, CDK7 and MNAT1 to form the 10-subunit holoenzyme (holo-TFIIH) active in transcription. The interaction with GTF2H2 results in the stimulation of the 5'--&gt;3' helicase activity. Component of the MMXD complex, which includes CIAO1, ERCC2, CIAO2B, MMS19 and SLC25A5. Interacts with CIAO1 and CIAO2B; the interaction WITH CIAO2B is direct. Interacts with ATF7IP. Interacts directly with MMS19. Part of TBP-based Pol II pre-initiation complex (PIC), in which Pol II core assembles with general transcription factors and other specific initiation factors including GTF2E1, GTF2E2, GTF2F1, GTF2F2, TCEA1, ERCC2, ERCC3, GTF2H2, GTF2H3, GTF2H4, GTF2H5, GTF2A1, GTF2A2, GTF2B and TBP; this large multi-subunit PIC complex mediates DNA unwinding and targets Pol II core to the transcription start site where the first phosphodiester bond forms. It depends on Mg(2+) as a cofactor. [4Fe-4S] cluster is required as a cofactor. Post-translationally, ISGylated.

It is found in the nucleus. It localises to the cytoplasm. Its subcellular location is the cytoskeleton. The protein resides in the spindle. It carries out the reaction Couples ATP hydrolysis with the unwinding of duplex DNA at the replication fork by translocating in the 5'-3' direction. This creates two antiparallel DNA single strands (ssDNA). The leading ssDNA polymer is the template for DNA polymerase III holoenzyme which synthesizes a continuous strand.. The catalysed reaction is ATP + H2O = ADP + phosphate + H(+). Its function is as follows. ATP-dependent 5'-3' DNA helicase, component of the general transcription and DNA repair factor IIH (TFIIH) core complex, which is involved in general and transcription-coupled nucleotide excision repair (NER) of damaged DNA and, when complexed to CDK-activating kinase (CAK), involved in transcription by RNA polymerase II. In NER, TFIIH acts by opening DNA around the lesion to allow the excision of the damaged oligonucleotide and its replacement by a new DNA fragment. The ATP-dependent helicase activity of XPD/ERCC2 is required for DNA opening. In transcription, TFIIH has an essential role in transcription initiation. When the pre-initiation complex (PIC) has been established, TFIIH is required for promoter opening and promoter escape. Phosphorylation of the C-terminal tail (CTD) of the largest subunit of RNA polymerase II by the kinase module CAK controls the initiation of transcription. XPD/ERCC2 acts by forming a bridge between CAK and the core-TFIIH complex. Involved in the regulation of vitamin-D receptor activity. As part of the mitotic spindle-associated MMXD complex it plays a role in chromosome segregation. Might have a role in aging process and could play a causative role in the generation of skin cancers. The sequence is that of General transcription and DNA repair factor IIH helicase subunit XPD (ERCC2) from Bos taurus (Bovine).